The following is a 175-amino-acid chain: Movement protein (175 aa).

Residues 30–47 (ADLDDDEEVTTGQEELFL) are homodimerization. The RNA-binding stretch occupies residues 50–156 (EQVRARHLFS…QRLTSTERNG (107 aa)). 2 positions are modified to phosphoserine: Ser-64 and Ser-133. Composition is skewed to polar residues over residues 116–141 (SLTSWTHTVNSTPFPQLSTSSGSQSP) and 148–169 (RLTSTERNGTTLPRTNSGSSTK). The segment at 116–175 (SLTSWTHTVNSTPFPQLSTSSGSQSPGKGRLQRLTSTERNGTTLPRTNSGSSTKAMVLHR) is disordered.

This sequence belongs to the polerovirus movement protein family. As to quaternary structure, homodimer. Phosphorylated.

Its subcellular location is the host cell junction. It localises to the host plasmodesma. The protein resides in the host Golgi apparatus. Its function is as follows. Together with movement protein P3a, facilitates long-distance movement of virions in host. Transports viral genome to neighboring plant cells directly through plasmosdesmata, without any budding. The movement protein allows efficient cell to cell propagation, by bypassing the host cell wall barrier. Binds ssRNA. In Turnip yellows virus (isolate FL-1) (TuYV), this protein is Movement protein.